A 433-amino-acid polypeptide reads, in one-letter code: MSFTVTKTAPAVITPSEPTPSGHILPLSFFDRLPFLRVFLVDMIMVYGHGDQPAKVIKEAVAKALVHYYPLAGRLTTDTDDGELSVACTGEGVWFVEATADCRMEDVNYLQVEPLMIPKEQILPSHPEGVDPYTLPFMIQVTQFRCGGFTFATRANHAVFDGIGAGQIKVAIGEMARGLKHPTVKPVWCRDVIRKPIPSQISATEPHDTDLSSIPDLKFTNNQTNIECCSFDLSLDHINHLKDHFAKEVGKICSVFDVIAAKLWQSRTRAIGLQPQTEVSLTFLLNIRQVVLHNELPPDGGYYGNCLVPLINKAPSGQIANAPLFEIVRLIKEAKDDLLSKDSASLIGEMPPYKKPSYADLSIVDWRRLGLYEADFGWGGPMFLVPLNEHTVTSCSTYLFKSPVASKKDVRLVTYCIVKEHLEAFRDEMNDFT.

Residues histidine 157 and aspartate 375 each act as proton acceptor in the active site.

It belongs to the plant acyltransferase family. In terms of tissue distribution, expressed in young cromes.

The catalysed reaction is myricetin 3-O-[beta-D-glucosyl-(1-&gt;2)-alpha-L-rhamnoside] + (E)-caffeoyl-CoA = myricetin 3-O-[(6-O-(E)-caffeoyl-beta-D-glucosyl)-(1-&gt;2)-alpha-L-rhamnoside] + CoA. Its pathway is flavonoid metabolism. In terms of biological role, caffeoyltransferase involved in montbretin A (MbA) biosynthesis. Catalyzes the caffeoylation of myricetin 3-O-beta-D-glucosyl 1,2-alpha-L-rhamnoside (MRG) to produce myricetin 3-O-(6'-O-caffeoyl)-beta-D-glucosyl 1,2-alpha-L-rhamnoside (mini-MbA), a precursor of MbA. Mini-MbA and MbA are potent inhibitors of human pancreatic alpha-amylase and are being developed as drug candidates to treat type-2 diabetes. In vitro, is able to catalyze the caffeoylation of quercetin 3-O-sophoroside (QGG), although QGG may not be a physiological substrate in vivo. In vitro, can use coumaryl-CoA, feruloyl-CoA and acetyl-CoA, although these three acyl donors may not be physiological in vivo. The polypeptide is Myricetin 3-O-glucosyl 1,2-rhamnoside 6'-O-caffeoyltransferase AT2 (Crocosmia x crocosmiiflora (Montbretia)).